We begin with the raw amino-acid sequence, 76 residues long: Small, acid-soluble spore protein Tlp (76 aa).

3 stretches are compositionally biased toward basic and acidic residues: residues 1 to 15 (MAKRDDRSNNPERIE), 26 to 38 (DEARDYAKAHSEE), and 46 to 76 (EIEQKNERREQSIDGLREELKDEVNDQKNNS). The disordered stretch occupies residues 1 to 76 (MAKRDDRSNN…DEVNDQKNNS (76 aa)).

Belongs to the Tlp family.

It localises to the spore core. This is Small, acid-soluble spore protein Tlp from Shouchella clausii (strain KSM-K16) (Alkalihalobacillus clausii).